The following is a 501-amino-acid chain: Putative zinc metalloprotease TM_0890 (501 aa).

Residue H17 coordinates Zn(2+). E18 is an active-site residue. A Zn(2+)-binding site is contributed by H21. The next 4 membrane-spanning stretches (helical) occupy residues 93-115, 401-420, 427-449, and 474-496; these read FLIT…LPIT, VQTG…SAAS, VLTV…LPAL, and IIHF…LDIG. Positions 96–180 constitute a PDZ domain; the sequence is TLAGPLFSIL…LVIIRNGEKK (85 aa).

Belongs to the peptidase M50B family. The cofactor is Zn(2+).

It is found in the cell inner membrane. The protein is Putative zinc metalloprotease TM_0890 of Thermotoga maritima (strain ATCC 43589 / DSM 3109 / JCM 10099 / NBRC 100826 / MSB8).